Here is a 114-residue protein sequence, read N- to C-terminus: MKRPFAVSVTYPTRESAEESSCELVRRRLAACCQISEITSIYFWKEAIVKETEYKLIAKTFSSLFAGIQEFVAGSHPYEVPEITGMEMHLASRQYLEWMNSCVDDTGQAPNTRQ.

It belongs to the CutA family. Homotrimer.

The polypeptide is Probable divalent-cation tolerance protein cutA homolog (Encephalitozoon cuniculi (strain GB-M1) (Microsporidian parasite)).